Reading from the N-terminus, the 592-residue chain is V-type ATP synthase alpha chain 2 (592 aa).

Residue 237–244 (GGFGTGKT) coordinates ATP.

The protein belongs to the ATPase alpha/beta chains family.

It carries out the reaction ATP + H2O + 4 H(+)(in) = ADP + phosphate + 5 H(+)(out). Functionally, produces ATP from ADP in the presence of a proton gradient across the membrane. The V-type alpha chain is a catalytic subunit. This chain is V-type ATP synthase alpha chain 2, found in Clostridium tetani (strain Massachusetts / E88).